A 158-amino-acid chain; its full sequence is Fibroblast growth factor 2 (158 aa).

Residues 1-12 (MAAGAAGSITTL) constitute a propeptide that is removed on maturation. Asn-39 lines the heparin pocket. Residues 131–147 (KRTGQYKPGPKTGPGQK) form a heparin-binding region.

This sequence belongs to the heparin-binding growth factors family.

The protein resides in the secreted. The protein localises to the nucleus. Functionally, acts as a ligand for FGFR1, FGFR2, FGFR3 and FGFR4. Also acts as an integrin ligand which is required for FGF2 signaling. Plays an important role in the regulation of cell survival, cell division, cell differentiation and cell migration. Functions as a potent mitogen in vitro. Can induce angiogenesis. The polypeptide is Fibroblast growth factor 2 (FGF2) (Gallus gallus (Chicken)).